The sequence spans 324 residues: 4-hydroxybenzoyl-CoA reductase subunit beta (324 aa).

The 216-residue stretch at 2 to 217 (NILTDFRTHR…AAIEVPPTGA (216 aa)) folds into the FAD-binding PCMH-type domain. FAD-binding positions include 29–36 (PLGAGTDL), Thr111, Asn115, and Gln118. The [4Fe-4S] cluster site is built by Cys122, Cys138, Cys146, and Cys155. FAD is bound by residues Asp162 and Lys224.

As to quaternary structure, heterohexamer of two alpha, two beta and two gamma subunits. The cofactor is FAD. [4Fe-4S] cluster serves as cofactor.

It catalyses the reaction oxidized 2[4Fe-4S]-[ferredoxin] + benzoyl-CoA + H2O = 4-hydroxybenzoyl-CoA + reduced 2[4Fe-4S]-[ferredoxin] + 2 H(+). With respect to regulation, inactivated by low concentrations of cyanide in vitro. Functionally, component of a complex that catalyzes the reductive dehydroxylation of 4-hydroxybenzoyl-CoA to benzoyl-CoA. Reaction is not reversible. Is a key enzyme in the anaerobic degradation of phenolic compounds. The chain is 4-hydroxybenzoyl-CoA reductase subunit beta (hcrB) from Thauera aromatica.